Reading from the N-terminus, the 355-residue chain is Alanine racemase (355 aa).

Catalysis depends on lysine 34, which acts as the Proton acceptor; specific for D-alanine. N6-(pyridoxal phosphate)lysine is present on lysine 34. Arginine 133 is a substrate binding site. Tyrosine 249 (proton acceptor; specific for L-alanine) is an active-site residue. Residue methionine 297 participates in substrate binding.

Belongs to the alanine racemase family. It depends on pyridoxal 5'-phosphate as a cofactor.

It carries out the reaction L-alanine = D-alanine. The protein operates within amino-acid biosynthesis; D-alanine biosynthesis; D-alanine from L-alanine: step 1/1. In terms of biological role, catalyzes the interconversion of L-alanine and D-alanine. May also act on other amino acids. The chain is Alanine racemase (alr) from Rickettsia conorii (strain ATCC VR-613 / Malish 7).